The following is a 172-amino-acid chain: 3-hydroxydecanoyl-[acyl-carrier-protein] dehydratase (172 aa).

The active site involves His-71.

Belongs to the thioester dehydratase family. FabA subfamily. As to quaternary structure, homodimer.

It localises to the cytoplasm. It carries out the reaction a (3R)-hydroxyacyl-[ACP] = a (2E)-enoyl-[ACP] + H2O. The catalysed reaction is (3R)-hydroxydecanoyl-[ACP] = (2E)-decenoyl-[ACP] + H2O. The enzyme catalyses (2E)-decenoyl-[ACP] = (3Z)-decenoyl-[ACP]. It functions in the pathway lipid metabolism; fatty acid biosynthesis. In terms of biological role, necessary for the introduction of cis unsaturation into fatty acids. Catalyzes the dehydration of (3R)-3-hydroxydecanoyl-ACP to E-(2)-decenoyl-ACP and then its isomerization to Z-(3)-decenoyl-ACP. Can catalyze the dehydratase reaction for beta-hydroxyacyl-ACPs with saturated chain lengths up to 16:0, being most active on intermediate chain length. The protein is 3-hydroxydecanoyl-[acyl-carrier-protein] dehydratase of Vibrio vulnificus (strain CMCP6).